The chain runs to 284 residues: MDAIKKKMQAMKLEKDNAMDRADTLEQQNKEANNRAEKSEEEVHNLQKRMQQLENDLDQVQESLLKANIQLVEKDKALSNAEGEVAALNRRIQLLEEDLERSEERLNTATTKLAEASQAADESERMRKVLENRSLSDEERMDALENQLKEARFLAEEADRKYDEVARKLAMVEADLERAEERAETGESKIVELEEELRVVGNNLKSLEVSEEKANQREEAYKEQIKTLTNKLKAAEARAEFAERSVQKLQKEVDRLEDELVNEKEKYKSITDELDQTFSELSGY.

The disordered stretch occupies residues 1–51 (MDAIKKKMQAMKLEKDNAMDRADTLEQQNKEANNRAEKSEEEVHNLQKRMQ). The stretch at 1–273 (MDAIKKKMQA…KEKYKSITDE (273 aa)) forms a coiled coil. A compositionally biased stretch (basic and acidic residues) spans 12 to 45 (KLEKDNAMDRADTLEQQNKEANNRAEKSEEEVHN). 7 igE-binding regions span residues 43-57 (VHNL…ENDL), 85-105 (VAAL…SEER), 133-153 (RSLS…EARF), 187-202 (ESKI…VVGN), 247-284 (QKLQ…LSGY), 249-260 (LQKEVDRLEDEL), and 266-281 (KYKS…FSEL).

It belongs to the tropomyosin family. Homodimer.

In terms of biological role, tropomyosin, in association with the troponin complex, plays a central role in the calcium dependent regulation of muscle contraction. This chain is Tropomyosin Pen a 1.0102, found in Penaeus aztecus (Brown shrimp).